The chain runs to 642 residues: MDNREALKTFMTGENFYLQHYLGAHREELNGEHGYTFRVWAPNAQAVHLVGDFTNWIENQIPMVRNDFGVWEVFTNMAQEGHIYKYHVTRQNGHQLMKIDPFAVRYEARPGTGAIVTELPEKKWKDGLWLARRKRWGFEERPVNIYEVHAGSWKRNSDGSPYSFAQLKDELIPYLVEMNYTHIEFMPLMSHPLGLSWGYQLMGYFALEHAYGRPEEFQDFVEECHTHNIGVIVDWVPGHFTINDDALAYYDGTPTFEYQDHNKAHNHGWGALNFDLGKNEVQSFLISCIKHWIDVYHLDGIRVDAVSNMLYLDYDDAPWTPNKDGGNLNYEGYYFLQRLNEVIKLEYPDVMMIAEESSSAIKITGMKEIGGLGFDYKWNMGWMNDILRFYEEDPIYRKYDFNLVTFSFMYVFKENYLLPFSHDEVVHGKKSMMHKMWGDRYNQFAGLRNLYTYQICHPGKKLLFMGSEYGQFLEWKSEEQLEWSNLEDPMNAKMKYFASQLNQFYKDHRCLWEIDTSYDGIEIIDADNRDQSVLSFIRKGKKGEMLVCIFNMVPVERKDFTIGLPVAGIYEEVWNTELEEWGGVWKEHNQTVQTQEGLWKDYEQTLTFTLPAMGASVWKIKRRLKSTKTVTNKNQKGVENEK.

Catalysis depends on D304, which acts as the Nucleophile. The active-site Proton donor is E355.

It belongs to the glycosyl hydrolase 13 family. GlgB subfamily. In terms of assembly, monomer.

The catalysed reaction is Transfers a segment of a (1-&gt;4)-alpha-D-glucan chain to a primary hydroxy group in a similar glucan chain.. The protein operates within glycan biosynthesis; glycogen biosynthesis. Catalyzes the formation of the alpha-1,6-glucosidic linkages in glycogen by scission of a 1,4-alpha-linked oligosaccharide from growing alpha-1,4-glucan chains and the subsequent attachment of the oligosaccharide to the alpha-1,6 position. This is 1,4-alpha-glucan branching enzyme GlgB from Streptococcus pneumoniae serotype 4 (strain ATCC BAA-334 / TIGR4).